A 105-amino-acid chain; its full sequence is Circadian clock oscillator protein KaiB (105 aa).

This sequence belongs to the KaiB family. As to quaternary structure, the KaiABC complex composition changes during the circadian cycle to control KaiC phosphorylation. Complexes KaiC(6), KaiA(2-4):KaiC(6), KaiB(6):KaiC(6) and KaiC(6):KaiB(6):KaiA(12) are among the most important forms, many form cooperatively. Undergoes a major conformational rearrangment; in the free state forms homotetramers as a dimer of dimers. When bound to the CI domain of KaiC switches to a monomeric thioredoxin-fold (KaiB(fs)). KaiB(fs) binds CikA, leading it to dephosphorylate phospho-RpaA.

Functionally, key component of the KaiABC oscillator complex, which constitutes the main circadian regulator in cyanobacteria. Complex composition changes during the circadian cycle to control KaiC phosphorylation. KaiA stimulates KaiC autophosphorylation, while KaiB sequesters KaiA, leading to KaiC autodephosphorylation. Phospho-Ser-431 KaiC accumulation triggers binding of KaiB to form the KaiB(6):KaiC(6) complex, leading to changes in output regulators CikA and SasA. KaiB switches to a thioredoxin-like fold (KaiB(fs)) when bound to KaiC. KaiB(6):KaiC(6) formation exposes a site for KaiA binding that sequesters KaiA from KaiC, making the KaiC(6):KaiB(6):KaiA(12) complex that results in KaiC autodephosphorylation. A metamorphic protein which reversibly switches between an inactive tetrameric fold and a rare, thioredoxin-like monomeric fold (KaiB(fs)). KaiB(fs) binds phospho-KaiC, KaiA and CikA. KaiA and CikA compete for binding to KaiB(fs), and KaiB(fs) and SasA compete for binding to KaiC, thus the clock oscillator and output signal pathway are tightly coupled. The polypeptide is Circadian clock oscillator protein KaiB (Cyanothece sp. (strain PCC 7425 / ATCC 29141)).